The following is a 284-amino-acid chain: Urease accessory protein UreD (284 aa).

Residues Met-1–Arg-28 form a disordered region.

Belongs to the UreD family. As to quaternary structure, ureD, UreF and UreG form a complex that acts as a GTP-hydrolysis-dependent molecular chaperone, activating the urease apoprotein by helping to assemble the nickel containing metallocenter of UreC. The UreE protein probably delivers the nickel.

The protein localises to the cytoplasm. Required for maturation of urease via the functional incorporation of the urease nickel metallocenter. The protein is Urease accessory protein UreD of Agrobacterium fabrum (strain C58 / ATCC 33970) (Agrobacterium tumefaciens (strain C58)).